A 158-amino-acid polypeptide reads, in one-letter code: Protein E6 (158 aa).

Zinc fingers lie at residues 32 to 68 (CVYCRRQLQRTEVYEFAFGDLNVVYRDGVPLAACQSC) and 105 to 141 (CMCCLKPLSPAEKLRHLNSKRRFHKIAGNFTGQCRHC). A PDZ-binding domain motif is present at residues 156 to 158 (TQV).

This sequence belongs to the papillomaviridae E6 protein family. In terms of assembly, forms homodimers. Interacts with ubiquitin-protein ligase UBE3A/E6-AP; this interaction stimulates UBE3A ubiquitin activity. Interacts with host BAK1.

It localises to the host cytoplasm. Its subcellular location is the host nucleus. In terms of biological role, plays a major role in the induction and maintenance of cellular transformation. E6 associates with host UBE3A/E6-AP ubiquitin-protein ligase and modulates its activity. Protects host keratinocytes from apoptosis by mediating the degradation of host BAK1. May also inhibit host immune response. This Homo sapiens (Human) protein is Protein E6.